The primary structure comprises 398 residues: Histidinol-phosphate aminotransferase (398 aa).

A compositionally biased stretch (polar residues) spans 1–10 (MTGQRATPQP). The segment at 1–30 (MTGQRATPQPTLDDLPLRDDLRGKSPYGAP) is disordered. Position 234 is an N6-(pyridoxal phosphate)lysine (Lys-234).

Belongs to the class-II pyridoxal-phosphate-dependent aminotransferase family. Histidinol-phosphate aminotransferase subfamily. Homodimer. Requires pyridoxal 5'-phosphate as cofactor.

The enzyme catalyses L-histidinol phosphate + 2-oxoglutarate = 3-(imidazol-4-yl)-2-oxopropyl phosphate + L-glutamate. Its pathway is amino-acid biosynthesis; L-histidine biosynthesis; L-histidine from 5-phospho-alpha-D-ribose 1-diphosphate: step 7/9. The protein is Histidinol-phosphate aminotransferase of Mycobacterium avium (strain 104).